The following is a 281-amino-acid chain: MKHPFSRLFSFGEKEQEEMEEKQEREEVRHIPVKSIIPNRFQPRTMFDEEKIDELALTIRTHGIIQPIVVRECGNGRFEIIAGERRWRAVQKLGWTEIPAIIKNLNDKETASVALIENLQREELTPIEEAMAYAKLIELHDLTQEALAQRLGKGQSTIANKLRLLKLPQEVQEALLQRAITERHARALIALKDKEKQLKLLQEIIDKQLNVKQTEDRVLKLLEAGERKPKPKRKAFSRDMRIAVNTIRQSLSMVESSGVSVQSEEEEFDDYYQITIRIAKK.

The interval 1–24 (MKHPFSRLFSFGEKEQEEMEEKQE) is disordered. Residues 145–164 (EALAQRLGKGQSTIANKLRL) constitute a DNA-binding region (H-T-H motif).

This sequence belongs to the ParB family.

Its subcellular location is the cytoplasm. It localises to the nucleoid. Effects nucleoid occlusion by binding relatively nonspecifically to DNA and preventing the assembly of the division machinery in the vicinity of the nucleoid, especially under conditions that disturb the cell cycle. It helps to coordinate cell division and chromosome segregation by preventing the formation of the Z ring through the nucleoid, which would cause chromosome breakage. The polypeptide is Nucleoid occlusion protein (Geobacillus kaustophilus (strain HTA426)).